The following is a 564-amino-acid chain: Dihydroxy-acid dehydratase 2 (564 aa).

C59 is a [2Fe-2S] cluster binding site. D91 contributes to the Mg(2+) binding site. C132 is a binding site for [2Fe-2S] cluster. Mg(2+)-binding residues include D133 and K134. Residue K134 is modified to N6-carboxylysine. C204 provides a ligand contact to [2Fe-2S] cluster. E454 is a Mg(2+) binding site. S480 (proton acceptor) is an active-site residue.

This sequence belongs to the IlvD/Edd family. In terms of assembly, homodimer. [2Fe-2S] cluster is required as a cofactor. The cofactor is Mg(2+).

The enzyme catalyses (2R)-2,3-dihydroxy-3-methylbutanoate = 3-methyl-2-oxobutanoate + H2O. It carries out the reaction (2R,3R)-2,3-dihydroxy-3-methylpentanoate = (S)-3-methyl-2-oxopentanoate + H2O. It functions in the pathway amino-acid biosynthesis; L-isoleucine biosynthesis; L-isoleucine from 2-oxobutanoate: step 3/4. Its pathway is amino-acid biosynthesis; L-valine biosynthesis; L-valine from pyruvate: step 3/4. Its function is as follows. Functions in the biosynthesis of branched-chain amino acids. Catalyzes the dehydration of (2R,3R)-2,3-dihydroxy-3-methylpentanoate (2,3-dihydroxy-3-methylvalerate) into 2-oxo-3-methylpentanoate (2-oxo-3-methylvalerate) and of (2R)-2,3-dihydroxy-3-methylbutanoate (2,3-dihydroxyisovalerate) into 2-oxo-3-methylbutanoate (2-oxoisovalerate), the penultimate precursor to L-isoleucine and L-valine, respectively. This Staphylococcus saprophyticus subsp. saprophyticus (strain ATCC 15305 / DSM 20229 / NCIMB 8711 / NCTC 7292 / S-41) protein is Dihydroxy-acid dehydratase 2.